The following is a 198-amino-acid chain: Ribonuclease HII (198 aa).

One can recognise an RNase H type-2 domain in the interval 3-198; sequence LSVGGIDEAG…SWETVGKLFK (196 aa). Residues Asp9, Glu10, and Asp104 each coordinate a divalent metal cation.

The protein belongs to the RNase HII family. It depends on Mn(2+) as a cofactor. Mg(2+) is required as a cofactor.

The protein resides in the cytoplasm. The enzyme catalyses Endonucleolytic cleavage to 5'-phosphomonoester.. In terms of biological role, endonuclease that specifically degrades the RNA of RNA-DNA hybrids. This is Ribonuclease HII from Pyrobaculum arsenaticum (strain DSM 13514 / JCM 11321 / PZ6).